Here is a 320-residue protein sequence, read N- to C-terminus: Biotin synthase (320 aa).

The Radical SAM core domain occupies 45-274; that stretch reads NDLQKASLLS…DSRIRLSAGR (230 aa). 3 residues coordinate [4Fe-4S] cluster: C60, C64, and C67. Residues C105, C137, C197, and R269 each contribute to the [2Fe-2S] cluster site.

This sequence belongs to the radical SAM superfamily. Biotin synthase family. As to quaternary structure, homodimer. It depends on [4Fe-4S] cluster as a cofactor. The cofactor is [2Fe-2S] cluster.

It carries out the reaction (4R,5S)-dethiobiotin + (sulfur carrier)-SH + 2 reduced [2Fe-2S]-[ferredoxin] + 2 S-adenosyl-L-methionine = (sulfur carrier)-H + biotin + 2 5'-deoxyadenosine + 2 L-methionine + 2 oxidized [2Fe-2S]-[ferredoxin]. The protein operates within cofactor biosynthesis; biotin biosynthesis; biotin from 7,8-diaminononanoate: step 2/2. Its function is as follows. Catalyzes the conversion of dethiobiotin (DTB) to biotin by the insertion of a sulfur atom into dethiobiotin via a radical-based mechanism. The chain is Biotin synthase from Beijerinckia indica subsp. indica (strain ATCC 9039 / DSM 1715 / NCIMB 8712).